Reading from the N-terminus, the 245-residue chain is Large ribosomal subunit protein uL29m (245 aa).

2 stretches are compositionally biased toward low complexity: residues 36-49 (SFNSQRSQFSTSSS) and 234-245 (STKSETTTSKNI). Disordered regions lie at residues 36 to 98 (SFNS…NPDH) and 207 to 245 (RPSPDEVLEEETETAMPTEVMPEELDSSTKSETTTSKNI).

The protein belongs to the universal ribosomal protein uL29 family. As to quaternary structure, component of the mitochondrial large ribosomal subunit. Mature mitochondrial ribosomes consist of a small (37S) and a large (54S) subunit. The 37S subunit contains at least 33 different proteins and 1 molecule of RNA (15S). The 54S subunit contains at least 45 different proteins and 1 molecule of RNA (21S).

It is found in the mitochondrion. The protein is Large ribosomal subunit protein uL29m (MRPL4) of Coccidioides immitis (strain RS) (Valley fever fungus).